Consider the following 597-residue polypeptide: MTARPYEPPPDYFCTHLLKNHQIEWKKPVKAKASPIHLFVFLREPMIEQRWPTTVRNSSIHPHVSSAHPSYRSHSIDAAVNRSSSACFHSPHRPSFPSRGLQKYDYPICGVSPSRHLSYNHFYNQSAAEIEEMLRTRQFPEIAGIYGNDEQPSLRRFTRYNQSINSRAVPPPAPPNPPKMEKHMSHDTSGRGSIFSKSSKKPLFFMGNWTFRDRNKSARPSISEALREERPQSMNLSDIKPATRSKSGEVLGPRNHIHIESITEFPRNIETRVPVKIERSSMVRRKPSNMGGSTEVSITSSSPSPSSSSSTSTGEFKTTITVDDDHQPTAVMRPKKESDTRGTLNNNRYSFQSCVQLRKSCPDLDSTAMSNMEQHRVSKKRTRRAKEKMSQAAWKRKTVKEWSLDDVLLWLQSAQMDDVAGLLIGYDLRGEDLLQWNDQTLAQLGVSNPEIRKKLLDDLSKIIENGPEPAQEDIRNNHRTLFDIVKQTSYDQVLAVETPLTTRDITVTHGRLGCLQITKVNGANLPLKEHDCLLEINERAGEQFKSALMLTKLISDSNGAAIRFVVLRRKTNLVVEESQQKESSSSGISSSPQTPTE.

Disordered stretches follow at residues 165–197 and 278–344; these read NSRA…IFSK and ERSS…RGTL. The span at 169-178 shows a compositional bias: pro residues; sequence VPPPAPPNPP. Residues 179–189 show a composition bias toward basic and acidic residues; it reads KMEKHMSHDTS. A compositionally biased stretch (low complexity) spans 293–313; that stretch reads STEVSITSSSPSPSSSSSTST. The region spanning 402–465 is the SAM domain; it reads WSLDDVLLWL…LDDLSKIIEN (64 aa). Residues 576-597 are disordered; sequence EESQQKESSSSGISSSPQTPTE. Low complexity predominate over residues 581–597; the sequence is KESSSSGISSSPQTPTE.

This is an uncharacterized protein from Caenorhabditis elegans.